Here is a 455-residue protein sequence, read N- to C-terminus: Protein png1 (455 aa).

The disordered stretch occupies residues 1–110 (MTDGRQQHTR…LPVFPSPPRD (110 aa)). Over residues 38-53 (SLQEQSRSRSRTQSPS) the composition is skewed to low complexity. A compositionally biased stretch (pro residues) spans 59 to 73 (HTPPHPSRAPPPPPT). The span at 74–98 (GAHYPSSQSPSQQHQQHQLPASSSL) shows a compositional bias: low complexity. Positions 199, 202, 231, and 236 each coordinate Zn(2+). Residues 408-455 (NLIPREQTSGRPGEQKTPASMQDTPVDWVAAQQMGPGQSGPDRSQDGR) form a disordered region.

The protein belongs to the transglutaminase-like superfamily. PNGase family.

The polypeptide is Protein png1 (png1) (Aspergillus fumigatus (strain ATCC MYA-4609 / CBS 101355 / FGSC A1100 / Af293) (Neosartorya fumigata)).